Consider the following 242-residue polypeptide: Small ribosomal subunit protein uS2 (242 aa).

The protein belongs to the universal ribosomal protein uS2 family.

The protein is Small ribosomal subunit protein uS2 of Shewanella oneidensis (strain ATCC 700550 / JCM 31522 / CIP 106686 / LMG 19005 / NCIMB 14063 / MR-1).